The following is a 289-amino-acid chain: Rhodopsin (289 aa).

Topologically, residues 1 to 7 are extracellular; the sequence is YLVNPAA. The chain crosses the membrane as a helical span at residues 8–32; sequence YAAPGAYMFLLILVGFPVNFLTLYV. Over 33 to 44 the chain is Cytoplasmic; it reads TLEHKKLRTPLN. Residues 45 to 67 form a helical membrane-spanning segment; the sequence is YILLNLAVADLFMVLGGFTTTMY. The Extracellular segment spans residues 68-81; sequence TSMHGYFVLGRLGC. Residues cysteine 81 and cysteine 158 are joined by a disulfide bond. The helical transmembrane segment at 82–104 threads the bilayer; it reads NLEGFFATLGGEIALWSLVVLAI. A 'Ionic lock' involved in activated form stabilization motif is present at residues 105–107; the sequence is ERW. Topologically, residues 105–123 are cytoplasmic; sequence ERWIVVCKPISNFRFTEDH. The chain crosses the membrane as a helical span at residues 124–144; it reads AIMGLAFSWVMALTCAVPPLV. Over 145-173 the chain is Extracellular; the sequence is GWSRYIPEGMQCSCGVDYYTRAEGFNNES. Asparagine 171 is a glycosylation site (N-linked (GlcNAc...) asparagine). Residues 174 to 195 form a helical membrane-spanning segment; it reads FVIYMFIVHFLIPLSNNFFCYG. Residues 196-223 lie on the Cytoplasmic side of the membrane; the sequence is RLLCAVKEAAAAQQESETTQRAEREVSR. The helical transmembrane segment at 224–245 threads the bilayer; the sequence is MVVMMVVSFLMCWLPYASVAWY. The Extracellular segment spans residues 246-257; it reads IFCNQGSEFGPI. A helical membrane pass occupies residues 258 to 279; that stretch reads FMTLPAFFAKSSAIYNPLIYIC. Lysine 267 carries the post-translational modification N6-(retinylidene)lysine. At 280–289 the chain is on the cytoplasmic side; it reads MNKHVRHCMI.

It belongs to the G-protein coupled receptor 1 family. Opsin subfamily. In terms of processing, phosphorylated on some or all of the serine and threonine residues present in the C-terminal region. Contains one covalently linked retinal chromophore.

It localises to the membrane. It is found in the cell projection. The protein localises to the cilium. The protein resides in the photoreceptor outer segment. Photoreceptor required for image-forming vision at low light intensity. While most salt water fish species use retinal as chromophore, most freshwater fish use 3-dehydroretinal, or a mixture of retinal and 3-dehydroretinal. Light-induced isomerization of 11-cis to all-trans retinal triggers a conformational change that activates signaling via G-proteins. Subsequent receptor phosphorylation mediates displacement of the bound G-protein alpha subunit by arrestin and terminates signaling. In Cottocomephorus grewingkii (Baikal yellowfin), this protein is Rhodopsin (rho).